The chain runs to 73 residues: Conotoxin Leo-O2 (73 aa).

Residues 1–22 (MKLTCVLIIAVLFLTACQLVTA) form the signal peptide. Residues 23–47 (DYSGDEQQYRAMRLIDAMRNFGDTR) constitute a propeptide that is removed on maturation. 3 disulfide bridges follow: C49-C59, C56-C64, and C58-C69.

It belongs to the conotoxin O1 superfamily. Expressed by the venom duct.

The protein resides in the secreted. The polypeptide is Conotoxin Leo-O2 (Conus leopardus (Leopard cone)).